The chain runs to 325 residues: Elongation factor P--(R)-beta-lysine ligase (325 aa).

Position 76–78 (76–78 (SPE)) interacts with substrate. ATP contacts are provided by residues 100–102 (RNE) and Asn109. Tyr118 contributes to the substrate binding site. ATP is bound at residue 244-245 (EL). Glu251 contacts substrate. Gly300 contributes to the ATP binding site.

This sequence belongs to the class-II aminoacyl-tRNA synthetase family. EpmA subfamily. Homodimer.

It carries out the reaction D-beta-lysine + L-lysyl-[protein] + ATP = N(6)-((3R)-3,6-diaminohexanoyl)-L-lysyl-[protein] + AMP + diphosphate + H(+). In terms of biological role, with EpmB is involved in the beta-lysylation step of the post-translational modification of translation elongation factor P (EF-P). Catalyzes the ATP-dependent activation of (R)-beta-lysine produced by EpmB, forming a lysyl-adenylate, from which the beta-lysyl moiety is then transferred to the epsilon-amino group of a conserved specific lysine residue in EF-P. The chain is Elongation factor P--(R)-beta-lysine ligase from Klebsiella pneumoniae subsp. pneumoniae (strain ATCC 700721 / MGH 78578).